Reading from the N-terminus, the 218-residue chain is Ribonuclease T (218 aa).

Residues 20–194 (VVIDVETAGF…YDAERTAELF (175 aa)) form the Exonuclease domain. Residues aspartate 23, glutamate 25, histidine 181, and aspartate 186 each contribute to the Mg(2+) site. Histidine 181 acts as the Proton donor/acceptor in catalysis.

Belongs to the RNase T family. Homodimer. Requires Mg(2+) as cofactor.

In terms of biological role, trims short 3' overhangs of a variety of RNA species, leaving a one or two nucleotide 3' overhang. Responsible for the end-turnover of tRNA: specifically removes the terminal AMP residue from uncharged tRNA (tRNA-C-C-A). Also appears to be involved in tRNA biosynthesis. In Baumannia cicadellinicola subsp. Homalodisca coagulata, this protein is Ribonuclease T.